Reading from the N-terminus, the 390-residue chain is Succinyl-diaminopimelate desuccinylase (390 aa).

Position 74 (H74) interacts with Zn(2+). The active site involves D76. Position 107 (D107) interacts with Zn(2+). E140 (proton acceptor) is an active-site residue. The Zn(2+) site is built by E141, E169, and H363.

Belongs to the peptidase M20A family. DapE subfamily. As to quaternary structure, homodimer. Zn(2+) serves as cofactor. Requires Co(2+) as cofactor.

It catalyses the reaction N-succinyl-(2S,6S)-2,6-diaminopimelate + H2O = (2S,6S)-2,6-diaminopimelate + succinate. Its pathway is amino-acid biosynthesis; L-lysine biosynthesis via DAP pathway; LL-2,6-diaminopimelate from (S)-tetrahydrodipicolinate (succinylase route): step 3/3. In terms of biological role, catalyzes the hydrolysis of N-succinyl-L,L-diaminopimelic acid (SDAP), forming succinate and LL-2,6-diaminopimelate (DAP), an intermediate involved in the bacterial biosynthesis of lysine and meso-diaminopimelic acid, an essential component of bacterial cell walls. The chain is Succinyl-diaminopimelate desuccinylase from Bartonella henselae (strain ATCC 49882 / DSM 28221 / CCUG 30454 / Houston 1) (Rochalimaea henselae).